A 446-amino-acid polypeptide reads, in one-letter code: Deoxyguanosinetriphosphate triphosphohydrolase-like protein (446 aa).

The disordered stretch occupies residues 1 to 28 (MSSSVWQERRHGEDKQRRNDHRSPFQRD). The segment covering 7 to 28 (QERRHGEDKQRRNDHRSPFQRD) has biased composition (basic and acidic residues). Positions 59 to 252 (RLTHSLEVSQ…MELADDIAYA (194 aa)) constitute an HD domain.

The protein belongs to the dGTPase family. Type 2 subfamily.

The chain is Deoxyguanosinetriphosphate triphosphohydrolase-like protein from Shewanella sp. (strain MR-4).